Here is a 405-residue protein sequence, read N- to C-terminus: Protein NCA1 (405 aa).

Residues 1 to 85 (MTTTSVCPFS…GNLNKDSTDS (85 aa)) form a disordered region. 2 stretches are compositionally biased toward basic and acidic residues: residues 13 to 24 (ARPDDGSTRKQG) and 37 to 48 (ARPDDASARKQG). The span at 76–85 (GNLNKDSTDS) shows a compositional bias: polar residues. The segment at 108 to 142 (CMLCQALLYESSRCVPCTHVFCKVCLTRFKDCPLC) adopts an RING-type zinc-finger fold. TPR repeat units follow at residues 247–280 (GAVLGMLGDCSRAMGDSSSAVKHFEESVEFLMKL) and 292–325 (SVSLNKIGDLKYYDEDLQAARSYYDRALNVRRDA).

Interacts with the catalases CAT1, CAT2 and CAT3. This interaction is not induced by alkaline stress or H(2)O(2) and NaCl treatments. Expressed in roots, stems, leaves, flowers and siliques.

It localises to the cytoplasm. It is found in the nucleus. Functionally, has holdase chaperone activity that may fold catalase to a functional structure. Not required for the peroxisome import of catalases. Required for the activity of catalases and acts mainly at the post-transcriptional level. The chain is Protein NCA1 from Arabidopsis thaliana (Mouse-ear cress).